We begin with the raw amino-acid sequence, 397 residues long: Tryptophan synthase beta chain (397 aa).

Lysine 88 is modified (N6-(pyridoxal phosphate)lysine).

The protein belongs to the TrpB family. Tetramer of two alpha and two beta chains. Pyridoxal 5'-phosphate is required as a cofactor.

It catalyses the reaction (1S,2R)-1-C-(indol-3-yl)glycerol 3-phosphate + L-serine = D-glyceraldehyde 3-phosphate + L-tryptophan + H2O. It functions in the pathway amino-acid biosynthesis; L-tryptophan biosynthesis; L-tryptophan from chorismate: step 5/5. In terms of biological role, the beta subunit is responsible for the synthesis of L-tryptophan from indole and L-serine. The protein is Tryptophan synthase beta chain of Shewanella amazonensis (strain ATCC BAA-1098 / SB2B).